A 188-amino-acid chain; its full sequence is Cell division protein ZapC (188 aa).

The protein belongs to the ZapC family. Interacts directly with FtsZ.

Its subcellular location is the cytoplasm. Functionally, contributes to the efficiency of the cell division process by stabilizing the polymeric form of the cell division protein FtsZ. Acts by promoting interactions between FtsZ protofilaments and suppressing the GTPase activity of FtsZ. The protein is Cell division protein ZapC of Psychromonas ingrahamii (strain DSM 17664 / CCUG 51855 / 37).